A 272-amino-acid polypeptide reads, in one-letter code: Phosphatidylglycerol--prolipoprotein diacylglyceryl transferase (272 aa).

7 consecutive transmembrane segments (helical) span residues Leu17–Ala37, Leu55–Tyr75, Val90–Phe110, Phe125–Gly145, Pro174–Phe194, Met202–Phe222, and Gly230–Ile250. Arg138 is an a 1,2-diacyl-sn-glycero-3-phospho-(1'-sn-glycerol) binding site.

It belongs to the Lgt family.

It localises to the cell inner membrane. The catalysed reaction is L-cysteinyl-[prolipoprotein] + a 1,2-diacyl-sn-glycero-3-phospho-(1'-sn-glycerol) = an S-1,2-diacyl-sn-glyceryl-L-cysteinyl-[prolipoprotein] + sn-glycerol 1-phosphate + H(+). The protein operates within protein modification; lipoprotein biosynthesis (diacylglyceryl transfer). In terms of biological role, catalyzes the transfer of the diacylglyceryl group from phosphatidylglycerol to the sulfhydryl group of the N-terminal cysteine of a prolipoprotein, the first step in the formation of mature lipoproteins. This chain is Phosphatidylglycerol--prolipoprotein diacylglyceryl transferase, found in Acinetobacter baumannii (strain AB307-0294).